We begin with the raw amino-acid sequence, 334 residues long: MAAPENTLHSTDSPLKRQREDEVNGVSDTLSKEPQPNGLSSVIPGWFSEISPMWPGEAHSLKVEKILFQGKSDYQDVMVFQSATYGKVLILDGVIQLTERDECAYQEMITHLPLCSIPNPKKVLVIGGGDGGVLREVARHSSVEKIDICEIDKMVVDVSKEYFPDIAVGFADPRVTLNIGDGVAFLKAAPEGTYDAVIVDSSDPIGPAQELFEKPFFESVARALRPGGVVCTQAESIWLHMHIIEDIVVNCRQVFKGSVNYAWTTVPTYPSGMIGFMLCSTEGPSVDFKHPVNPIDENDSQQAARPLKFYNREIHSAAFCLPSFAKRAIASKEN.

The tract at residues 1 to 37 is disordered; it reads MAAPENTLHSTDSPLKRQREDEVNGVSDTLSKEPQPN. The span at 26–37 shows a compositional bias: polar residues; that stretch reads VSDTLSKEPQPN. One can recognise a PABS domain in the interval 44-281; the sequence is PGWFSEISPM…GMIGFMLCST (238 aa). Residue Q75 coordinates S-adenosyl 3-(methylsulfanyl)propylamine. Residue Y105 participates in putrescine binding. S-adenosyl 3-(methylsulfanyl)propylamine-binding positions include Q106, D130, E150, 181–182, and D200; that span reads DG. The active-site Proton acceptor is D200. Putrescine-binding positions include 200–203 and Y269; that span reads DSSD.

Belongs to the spermidine/spermine synthase family.

The enzyme catalyses S-adenosyl 3-(methylsulfanyl)propylamine + putrescine = S-methyl-5'-thioadenosine + spermidine + H(+). The protein operates within amine and polyamine biosynthesis; spermidine biosynthesis; spermidine from putrescine: step 1/1. The protein is Spermidine synthase 1 (SPDSYN1) of Pisum sativum (Garden pea).